The chain runs to 306 residues: MSITKTELDGILPLVARGKVRDIYEVDAGTLLFVATDRISAYDVIMENSIPEKGILLTKLSEFWFKFLSNDVRNHLVDIAPGKTIFDYLPAKLSEPKYKTQLEDRSLLVHKHKLIPLEVIVRGYITGSAWKEYVKTGTVHGLKQPQGLKESQEFPEPIFTPSTKAEQGEHDENISPAQAAELVGEDLSRRVAELAVKLYSKCKDYAKEKGIIIADTKFEFGIDEKTNEIILVDEVLTPDSSRFWNGASYKVGESQDSYDKQFLRDWLTANKLNGVNGVKMPQDIVDRTRAKYIEAYETLTGSKWSH.

Ser2 carries the N-acetylserine modification.

It belongs to the SAICAR synthetase family. Monomer.

The catalysed reaction is 5-amino-1-(5-phospho-D-ribosyl)imidazole-4-carboxylate + L-aspartate + ATP = (2S)-2-[5-amino-1-(5-phospho-beta-D-ribosyl)imidazole-4-carboxamido]succinate + ADP + phosphate + 2 H(+). It participates in purine metabolism; IMP biosynthesis via de novo pathway; 5-amino-1-(5-phospho-D-ribosyl)imidazole-4-carboxamide from 5-amino-1-(5-phospho-D-ribosyl)imidazole-4-carboxylate: step 1/2. Its function is as follows. Catalyzes the reaction of 4-carboxy-5-aminoimidazole ribotide (CAIR) and aspartic acid with the formation of N-succinyl-5-amino-imidazole-4-carboxamide ribotide (SAICAR) in the purine biosynthesis pathway. The sequence is that of Phosphoribosylaminoimidazole-succinocarboxamide synthase (ADE1) from Saccharomyces cerevisiae (strain ATCC 204508 / S288c) (Baker's yeast).